We begin with the raw amino-acid sequence, 440 residues long: Transposon Ty1-JR2 Gag polyprotein (440 aa).

The segment covering M1–S16 has biased composition (low complexity). 3 disordered regions span residues M1–Q93, P126–P173, and G352–Y440. Composition is skewed to polar residues over residues T48 to S60, S71 to Q93, and Q127 to F152. Positions T153–T165 are enriched in low complexity. The interval N299–H401 is RNA-binding. Positions N402–S418 are enriched in low complexity. S416 is modified (phosphoserine). Over residues K419–N428 the composition is skewed to polar residues. The segment covering N429 to Y440 has biased composition (basic and acidic residues).

In terms of assembly, homotrimer.

The protein resides in the cytoplasm. Its function is as follows. Capsid protein (CA) is the structural component of the virus-like particle (VLP), forming the shell that encapsulates the retrotransposons dimeric RNA genome. The particles are assembled from trimer-clustered units and there are holes in the capsid shells that allow for the diffusion of macromolecules. CA also has nucleocapsid-like chaperone activity, promoting primer tRNA(i)-Met annealing to the multipartite primer-binding site (PBS), dimerization of Ty1 RNA and initiation of reverse transcription. This is Transposon Ty1-JR2 Gag polyprotein (TY1A-JR2) from Saccharomyces cerevisiae (strain ATCC 204508 / S288c) (Baker's yeast).